A 339-amino-acid polypeptide reads, in one-letter code: DNA-directed RNA polymerase subunit alpha (339 aa).

The alpha N-terminal domain (alpha-NTD) stretch occupies residues 1–235; it reads MVLQKNWQSL…DQLQLFINFD (235 aa). Residues 251–339 form an alpha C-terminal domain (alpha-CTD) region; sequence FNRNLLRKVD…DLAKRLDETF (89 aa).

Belongs to the RNA polymerase alpha chain family. In terms of assembly, homodimer. The RNAP catalytic core consists of 2 alpha, 1 beta, 1 beta' and 1 omega subunit. When a sigma factor is associated with the core the holoenzyme is formed, which can initiate transcription.

The enzyme catalyses RNA(n) + a ribonucleoside 5'-triphosphate = RNA(n+1) + diphosphate. Its function is as follows. DNA-dependent RNA polymerase catalyzes the transcription of DNA into RNA using the four ribonucleoside triphosphates as substrates. This Gluconobacter oxydans (strain 621H) (Gluconobacter suboxydans) protein is DNA-directed RNA polymerase subunit alpha.